The sequence spans 290 residues: D-tagatose 3-epimerase (290 aa).

Residue Cys66 participates in substrate binding. The Proton donor/acceptor role is filled by Glu152. A Mn(2+)-binding site is contributed by Glu152. Substrate-binding positions include Glu158 and 185-188 (DTFH). Positions 185 and 211 each coordinate Mn(2+). Position 217 (Arg217) interacts with substrate. Glu246 (proton donor/acceptor) is an active-site residue. Glu246 lines the Mn(2+) pocket.

It belongs to the hyi family. In terms of assembly, homodimer. It depends on Mn(2+) as a cofactor.

It carries out the reaction keto-D-tagatose = keto-D-sorbose. It catalyses the reaction D-allulose = keto-D-fructose. The enzyme catalyses D-ribulose = D-xylulose. Strongly inhibited (about 90% of the enzyme activity) by Ag(+), Hg(2+) and p-chloromercuribenzoic acid. Cu(2+) and Zn(2+) inhibit about 60% of the enzyme activity. Functionally, catalyzes the epimerization of various ketoses at the C(3) position. It is able to interconvert D-tagatose and D-ribulose to D-sorbose and D-xylulose, respectively. The enzyme is also able to accept other ketopentoses such as D-psicose with lower efficiency. This chain is D-tagatose 3-epimerase, found in Pseudomonas cichorii.